A 486-amino-acid polypeptide reads, in one-letter code: Inosine-5'-monophosphate dehydrogenase (486 aa).

CBS domains are found at residues 99 to 154 and 156 to 215; these read IVED…LVKE and MTKE…VRDE. Residues aspartate 247 and 294 to 296 each bind NAD(+); that span reads GIG. Residues glycine 296 and glycine 298 each coordinate K(+). Serine 299 contacts IMP. Cysteine 301 is a K(+) binding site. Residue cysteine 301 is the Thioimidate intermediate of the active site. IMP-binding positions include 334-336, 357-358, and 381-385; these read DGG, GN, and YRGMG. Catalysis depends on arginine 397, which acts as the Proton acceptor. Glutamate 412 contributes to the IMP binding site. The K(+) site is built by glutamate 466, serine 467, and histidine 468.

The protein belongs to the IMPDH/GMPR family. In terms of assembly, homotetramer. The cofactor is K(+).

The enzyme catalyses IMP + NAD(+) + H2O = XMP + NADH + H(+). It functions in the pathway purine metabolism; XMP biosynthesis via de novo pathway; XMP from IMP: step 1/1. Its activity is regulated as follows. Mycophenolic acid (MPA) is a non-competitive inhibitor that prevents formation of the closed enzyme conformation by binding to the same site as the amobile flap. In contrast, mizoribine monophosphate (MZP) is a competitive inhibitor that induces the closed conformation. MPA is a potent inhibitor of mammalian IMPDHs but a poor inhibitor of the bacterial enzymes. MZP is a more potent inhibitor of bacterial IMPDH. Its function is as follows. Catalyzes the conversion of inosine 5'-phosphate (IMP) to xanthosine 5'-phosphate (XMP), the first committed and rate-limiting step in the de novo synthesis of guanine nucleotides, and therefore plays an important role in the regulation of cell growth. This is Inosine-5'-monophosphate dehydrogenase from Pyrococcus horikoshii (strain ATCC 700860 / DSM 12428 / JCM 9974 / NBRC 100139 / OT-3).